Reading from the N-terminus, the 64-residue chain is Putative H/ACA ribonucleoprotein complex subunit 3 (64 aa).

It belongs to the NOP10 family. Component of the small nucleolar ribonucleoprotein particles containing H/ACA-type snoRNAs (H/ACA snoRNPs).

The protein localises to the nucleus. Its subcellular location is the nucleolus. In terms of biological role, required for ribosome biogenesis. Part of a complex which catalyzes pseudouridylation of rRNA. This involves the isomerization of uridine such that the ribose is subsequently attached to C5, instead of the normal N1. Pseudouridine ('psi') residues may serve to stabilize the conformation of rRNAs. This is Putative H/ACA ribonucleoprotein complex subunit 3 (nola-3) from Caenorhabditis elegans.